We begin with the raw amino-acid sequence, 252 residues long: Adenosylcobinamide-GDP ribazoletransferase (252 aa).

Transmembrane regions (helical) follow at residues 4-24, 35-55, 65-85, 102-122, 178-198, 201-221, and 232-252; these read LLLL…LPYI, LVPM…GGMN, SALV…DGAM, VMAD…ILLL, LLPG…VNNH, LITV…AAWF, and TYGA…TILT.

This sequence belongs to the CobS family. The cofactor is Mg(2+).

It localises to the cell inner membrane. It carries out the reaction alpha-ribazole + adenosylcob(III)inamide-GDP = adenosylcob(III)alamin + GMP + H(+). It catalyses the reaction alpha-ribazole 5'-phosphate + adenosylcob(III)inamide-GDP = adenosylcob(III)alamin 5'-phosphate + GMP + H(+). The protein operates within cofactor biosynthesis; adenosylcobalamin biosynthesis; adenosylcobalamin from cob(II)yrinate a,c-diamide: step 7/7. Joins adenosylcobinamide-GDP and alpha-ribazole to generate adenosylcobalamin (Ado-cobalamin). Also synthesizes adenosylcobalamin 5'-phosphate from adenosylcobinamide-GDP and alpha-ribazole 5'-phosphate. In Trichormus variabilis (strain ATCC 29413 / PCC 7937) (Anabaena variabilis), this protein is Adenosylcobinamide-GDP ribazoletransferase.